Here is a 578-residue protein sequence, read N- to C-terminus: GRAM domain-containing protein 4 (578 aa).

Disordered stretches follow at residues 23 to 58 (ESPN…AGPG) and 136 to 159 (TEEQ…ERRS). Serine 24 and serine 28 each carry phosphoserine. Residues 44 to 53 (SPRDSEELRD) are compositionally biased toward basic and acidic residues. Positions 83-143 (HLEIALLEKH…ARTEEQMAQQ (61 aa)) form a coiled coil. 3 helical membrane passes run 240–260 (VYMN…LAIL), 334–354 (ITQK…FFPY), and 356–376 (LVGL…DFIF). Residues 415–435 (QTTSSRSYVPSAPAGLGKEED) are disordered. The GRAM domain occupies 445-523 (GNFHEIFNLT…VDITDIQKYK (79 aa)).

In terms of assembly, interacts with RTN4 (isoform B). In terms of tissue distribution, expressed in lung and in primary lung squamous cell carcinoma (LSCC).

The protein localises to the mitochondrion membrane. It localises to the endoplasmic reticulum membrane. Functionally, plays a role as a mediator of E2F1-induced apoptosis in the absence of p53/TP53. Plays a role as a mediator of E2F1-induced apoptosis in the absence of p53/TP53. Inhibits TLR9 response to nucelic acids and regulates TLR9-mediated innate immune response. This is GRAM domain-containing protein 4 from Homo sapiens (Human).